Reading from the N-terminus, the 327-residue chain is Phenylalanine--tRNA ligase alpha subunit (327 aa).

Glu-252 lines the Mg(2+) pocket.

Belongs to the class-II aminoacyl-tRNA synthetase family. Phe-tRNA synthetase alpha subunit type 1 subfamily. As to quaternary structure, tetramer of two alpha and two beta subunits. Requires Mg(2+) as cofactor.

It localises to the cytoplasm. It carries out the reaction tRNA(Phe) + L-phenylalanine + ATP = L-phenylalanyl-tRNA(Phe) + AMP + diphosphate + H(+). This is Phenylalanine--tRNA ligase alpha subunit from Shewanella baltica (strain OS185).